The primary structure comprises 155 residues: Deoxyuridine 5'-triphosphate nucleotidohydrolase (155 aa).

Residues 71–73 (RSG), N84, 88–90 (TID), and K98 contribute to the substrate site.

It belongs to the dUTPase family. Mg(2+) is required as a cofactor.

The enzyme catalyses dUTP + H2O = dUMP + diphosphate + H(+). Its pathway is pyrimidine metabolism; dUMP biosynthesis; dUMP from dCTP (dUTP route): step 2/2. Functionally, this enzyme is involved in nucleotide metabolism: it produces dUMP, the immediate precursor of thymidine nucleotides and it decreases the intracellular concentration of dUTP so that uracil cannot be incorporated into DNA. The chain is Deoxyuridine 5'-triphosphate nucleotidohydrolase from Corynebacterium jeikeium (strain K411).